The following is a 26-amino-acid chain: PRKCH upstream open reading frame 2 (26 aa).

Interacts with protein kinase C eta as well as other protein kinases including PRKCD, PRKCQ and PRKCE but not with PRKCG or PRKCZ; the interactions lead to inhibition of kinase activity.

In terms of biological role, product of an upstream open reading frame (ORF) of PRKCH which regulates translation of the downstream protein kinase C eta (PKC-eta) ORF. Functions as a repressive element that maintains low basal levels of PKC-eta in growing cells but enhances its expression during stress conditions induced by amino acid starvation in a EIF2AK4/GCN2-dependent manner. In addition to its role in regulating PKC-eta translation, also inhibits the kinase activity of PKC-eta as well as other protein kinases including PRKCD, PRKCQ and PRKCE but not PRKCA, PRKCG or PRKCZ. This is PRKCH upstream open reading frame 2 from Homo sapiens (Human).